Consider the following 457-residue polypeptide: Chromosomal replication initiator protein DnaA (457 aa).

The interval 1–90 (MAVSLWQQCI…RPSAKPQAPA (90 aa)) is domain I, interacts with DnaA modulators. The segment at 79 to 120 (GSRPSAKPQAPAPAAVKAAAPQPKPGNSFVSQPEPAVSNHRS) is disordered. Low complexity predominate over residues 84–99 (AKPQAPAPAAVKAAAP). The tract at residues 91-120 (PAAVKAAAPQPKPGNSFVSQPEPAVSNHRS) is domain II. The tract at residues 121–337 (NINPTYQFDN…GALNRVIANA (217 aa)) is domain III, AAA+ region. Residues Gly165, Gly167, Lys168, and Thr169 each coordinate ATP. The segment at 338–457 (NFTGRPITID…YANLIRTLSS (120 aa)) is domain IV, binds dsDNA.

It belongs to the DnaA family. Oligomerizes as a right-handed, spiral filament on DNA at oriC.

The protein localises to the cytoplasm. Its function is as follows. Plays an essential role in the initiation and regulation of chromosomal replication. ATP-DnaA binds to the origin of replication (oriC) to initiate formation of the DNA replication initiation complex once per cell cycle. Binds the DnaA box (a 9 base pair repeat at the origin) and separates the double-stranded (ds)DNA. Forms a right-handed helical filament on oriC DNA; dsDNA binds to the exterior of the filament while single-stranded (ss)DNA is stabiized in the filament's interior. The ATP-DnaA-oriC complex binds and stabilizes one strand of the AT-rich DNA unwinding element (DUE), permitting loading of DNA polymerase. After initiation quickly degrades to an ADP-DnaA complex that is not apt for DNA replication. Binds acidic phospholipids. This chain is Chromosomal replication initiator protein DnaA, found in Shewanella amazonensis (strain ATCC BAA-1098 / SB2B).